The primary structure comprises 199 residues: Inner membrane-spanning protein YciB (199 aa).

A run of 6 helical transmembrane segments spans residues 7 to 27, 32 to 52, 56 to 76, 93 to 113, 126 to 146, and 153 to 173; these read HPLF…AANA, FVAT…SYVV, IPLM…LTLV, LFAG…AIMF, VLTL…ELIW, and FWVN…AMMQ.

This sequence belongs to the YciB family.

Its subcellular location is the cell inner membrane. Plays a role in cell envelope biogenesis, maintenance of cell envelope integrity and membrane homeostasis. The polypeptide is Inner membrane-spanning protein YciB (Nitrobacter hamburgensis (strain DSM 10229 / NCIMB 13809 / X14)).